The chain runs to 506 residues: Zinc finger protein MAGPIE (506 aa).

The segment at 1–53 (MTTEDQTISSSGGYVQSSSTTDHVDHHHHDQHESLNPPLVKKKRNLPGNPDPE) is disordered. A compositionally biased stretch (low complexity) spans 9-21 (SSSGGYVQSSSTT). The span at 22 to 33 (DHVDHHHHDQHE) shows a compositional bias: basic and acidic residues. Serine 60 carries the post-translational modification Phosphoserine. 2 C2H2-type zinc fingers span residues 70 to 92 (FLCE…RRGH) and 111 to 141 (YVCP…CRKH). Residues 133–140 (IKKHFCRK) carry the Nuclear localization signal motif. The C2H2-type 2; degenerate zinc-finger motif lies at 146-169 (WKCEKCAKRYAVQSDWKAHSKTCG). Zn(2+)-binding residues include cysteine 148, cysteine 151, histidine 164, cysteine 168, cysteine 175, cysteine 177, histidine 190, and cysteine 194. The CCHC-type 2; atypical zinc-finger motif lies at 173-196 (YRCDCGTIFSRRDSFITHRAFCDA). An SHR-binding region spans residues 183 to 195 (RRDSFITHRAFCD).

Interacts with SHR, SCR and JKD, but not with itself. Interacts with SIEL. Binds to RGA and SCL3 competitively in the nucleus. As to expression, expressed in the ground tissue and stele cells of embryos and 2-days post-germination roots but not in the quiescent center. Detected only in cells that perform asymmetric cell divisions. In roots, present in cortex, endodermis, and pericycle layer.

Its subcellular location is the nucleus. In terms of biological role, transcription factor that regulates tissue boundaries and asymmetric cell division. Contributes to the sequestration of 'SHORT-ROOT' to the nucleus. Interacts with the SCR and MGP promoters. Does not show transcription activity by itself, but regulates the transcription of downstream genes through interaction with other transcription factors. Binds DNA via its zinc fingers. Recognizes and binds to SCL3 promoter sequence 5'-AGACAA-3' to promote its expression when in complex with RGA. Positively involved in gibberellic acid (GA) signaling. This is Zinc finger protein MAGPIE from Arabidopsis thaliana (Mouse-ear cress).